The following is a 246-amino-acid chain: Probable chemoreceptor glutamine deamidase CheD (246 aa).

Residues 225–246 (GAGVQPAVQKAASPYAANLSRK) are disordered.

Belongs to the CheD family.

The catalysed reaction is L-glutaminyl-[protein] + H2O = L-glutamyl-[protein] + NH4(+). Probably deamidates glutamine residues to glutamate on methyl-accepting chemotaxis receptors (MCPs), playing an important role in chemotaxis. This chain is Probable chemoreceptor glutamine deamidase CheD, found in Burkholderia vietnamiensis (strain G4 / LMG 22486) (Burkholderia cepacia (strain R1808)).